We begin with the raw amino-acid sequence, 627 residues long: Altered inheritance of mitochondria protein 9, mitochondrial (627 aa).

The N-terminal 43 residues, Met-1–Val-43, are a transit peptide targeting the mitochondrion.

Belongs to the AIM9 family.

Its subcellular location is the mitochondrion. This chain is Altered inheritance of mitochondria protein 9, mitochondrial (AIM9), found in Saccharomyces cerevisiae (strain YJM789) (Baker's yeast).